The chain runs to 275 residues: Peptidoglycan-N-acetylglucosamine deacetylase BC_1960 (275 aa).

One can recognise a NodB homology domain in the interval 81 to 262 (AEVALTFDDG…QLKTKGARFV (182 aa)). Aspartate 88 functions as the Proton acceptor in the catalytic mechanism. Zn(2+)-binding residues include aspartate 89, histidine 139, and histidine 143. Position 179 is a 2-hydroxyproline; partial (proline 179). The active-site Proton donor is the histidine 233.

This sequence belongs to the polysaccharide deacetylase family. The cofactor is Zn(2+). Post-translationally, hydroxylated on Pro-179. Hydroxylation alters the active site and enhances significantly deacetylase activity, probably by creating a more favorable environment for transition-state stabilization. It might be autocatalytic.

The enzyme catalyses peptidoglycan-N-acetyl-D-glucosamine + H2O = peptidoglycan-D-glucosamine + acetate.. Deacetylase activity is stimulated by hydroxylation on Pro-179. Inhibited by CuCl(2) and ZnCl(2). Inhibited by the hydroxamate N-hydroxy-4-(naphthalene-1-yl)benzamide (NHNB). Catalyzes the deacetylation of N-acetylglucosamine (GlcNAc) residues in peptidoglycan. Also acts on soluble chitin substrates and N-acetylchitooligomers. Acts on cell wall peptidoglycan from the Gram-positive bacteria B.cereus and B.subtilis and the Gram-negative bacterium H.pylori. Not active on acetylated xylan. This Bacillus cereus (strain ATCC 14579 / DSM 31 / CCUG 7414 / JCM 2152 / NBRC 15305 / NCIMB 9373 / NCTC 2599 / NRRL B-3711) protein is Peptidoglycan-N-acetylglucosamine deacetylase BC_1960.